A 577-amino-acid chain; its full sequence is Arginine--tRNA ligase (577 aa).

Positions P122 to H132 match the 'HIGH' region motif.

This sequence belongs to the class-I aminoacyl-tRNA synthetase family. As to quaternary structure, monomer.

It is found in the cytoplasm. It carries out the reaction tRNA(Arg) + L-arginine + ATP = L-arginyl-tRNA(Arg) + AMP + diphosphate. This chain is Arginine--tRNA ligase, found in Enterobacter sp. (strain 638).